The sequence spans 337 residues: MRPVILDVEGYELDSEEKEILAHPLVAGIILFTRNYYDIEQLKALVKDIRRYAGNELLIAVDHEGGRVQRFRDDFTRLPSAGSLIEKNDMKTACELAFSSAWVMASELIACDIDFSFAPVLDLNGISNVIQNRAFSSSITETVTLAEAYINGMKSAGMVSTGKHFPGHGSVEADSHTALPVDSRSELEIFTKDIKPFENLIKKGALDAVMPSHVVYSQCDLQPAGFSSYWLDDVLRTRLGFKGVVISDDLSMHGASFVGNHLSRAESAIQAGCDLILACNDRSGAVSILDNLKVKPTAQYHAVNQLRSTKNKFILPLNKNPIWIKNKQMLMQLSEQF.

Substrate-binding positions include Asp62, Arg70, Arg133, and 163–164 (KH). His176 (proton donor/acceptor) is an active-site residue. Asp248 functions as the Nucleophile in the catalytic mechanism.

This sequence belongs to the glycosyl hydrolase 3 family. NagZ subfamily.

It is found in the cytoplasm. The catalysed reaction is Hydrolysis of terminal non-reducing N-acetyl-D-hexosamine residues in N-acetyl-beta-D-hexosaminides.. Its pathway is cell wall biogenesis; peptidoglycan recycling. Functionally, plays a role in peptidoglycan recycling by cleaving the terminal beta-1,4-linked N-acetylglucosamine (GlcNAc) from peptide-linked peptidoglycan fragments, giving rise to free GlcNAc, anhydro-N-acetylmuramic acid and anhydro-N-acetylmuramic acid-linked peptides. The sequence is that of Beta-hexosaminidase from Psychromonas ingrahamii (strain DSM 17664 / CCUG 51855 / 37).